The following is a 619-amino-acid chain: ATP-dependent zinc metalloprotease FtsH 1 (619 aa).

The Cytoplasmic segment spans residues 1-8 (MADEKRPA). Residues 9–29 (SRAWLGYLLIAVGILVLSGIV) form a helical membrane-spanning segment. The Periplasmic portion of the chain corresponds to 30-108 (RSRGRPLVPY…RIEAKSPQTS (79 aa)). The chain crosses the membrane as a helical span at residues 109–129 (VWMQVAIWMLPLVLINAAFFM). Residues 130 to 619 (MLRRAGQGAG…KIAVGPPSAA (490 aa)) lie on the Cytoplasmic side of the membrane. Position 203–210 (203–210 (GPPGTGKT)) interacts with ATP. His426 provides a ligand contact to Zn(2+). Glu427 is a catalytic residue. Residues His430 and Asp503 each coordinate Zn(2+).

The protein in the central section; belongs to the AAA ATPase family. This sequence in the C-terminal section; belongs to the peptidase M41 family. Homohexamer. The cofactor is Zn(2+).

It is found in the cell inner membrane. In terms of biological role, acts as a processive, ATP-dependent zinc metallopeptidase for both cytoplasmic and membrane proteins. Plays a role in the quality control of integral membrane proteins. The chain is ATP-dependent zinc metalloprotease FtsH 1 from Sorangium cellulosum (strain So ce56) (Polyangium cellulosum (strain So ce56)).